Consider the following 350-residue polypeptide: Heat-inducible transcription repressor HrcA (350 aa).

It belongs to the HrcA family.

Its function is as follows. Negative regulator of class I heat shock genes (grpE-dnaK-dnaJ and groELS operons). Prevents heat-shock induction of these operons. This is Heat-inducible transcription repressor HrcA from Ligilactobacillus salivarius (strain UCC118) (Lactobacillus salivarius).